Reading from the N-terminus, the 352-residue chain is Poly(A)+ RNA export protein (352 aa).

WD repeat units lie at residues 28 to 58 (PPEDSISDLAFSPQAEYLAASSWDSKVRIYE), 72 to 102 (EHQGPVLSVNWSRDGTKVASGSVDKSAKVFD), 113 to 146 (AHDDAVRCVRFVEAMGTSPILATGSWDKTLKYWD), 192 to 229 (IFKLAMSPLKFQTRSLACFIKGDGYAIGSVEGRCAIQN), and 252 to 282 (ADVYSVNSIAFHPQYGTFSTAGSDGTFSFWD).

The protein belongs to the WD repeat rae1 family. Interacts with rpn15/dss1 and uap56.

It localises to the nucleus. Required for mitotic cell growth as well as for spore germination. Functions in cell cycle progression through trafficking of proteins required for mitosis. Has a role in the mRNA export process. The polypeptide is Poly(A)+ RNA export protein (rae1) (Schizosaccharomyces pombe (strain 972 / ATCC 24843) (Fission yeast)).